An 838-amino-acid chain; its full sequence is Protein translocase subunit SecA 1 (838 aa).

Residues glutamine 85, 103-107 (GEGKT), and aspartate 493 contribute to the ATP site. The Zn(2+) site is built by cysteine 823, cysteine 825, cysteine 834, and histidine 835.

Belongs to the SecA family. As to quaternary structure, monomer and homodimer. Part of the essential Sec protein translocation apparatus which comprises SecA, SecYEG and auxiliary proteins SecDF. Other proteins may also be involved. The cofactor is Zn(2+).

It is found in the cell membrane. Its subcellular location is the cytoplasm. The enzyme catalyses ATP + H2O + cellular proteinSide 1 = ADP + phosphate + cellular proteinSide 2.. In terms of biological role, part of the Sec protein translocase complex. Interacts with the SecYEG preprotein conducting channel. Has a central role in coupling the hydrolysis of ATP to the transfer of proteins into and across the cell membrane, serving as an ATP-driven molecular motor driving the stepwise translocation of polypeptide chains across the membrane. This Streptococcus gordonii protein is Protein translocase subunit SecA 1.